A 340-amino-acid polypeptide reads, in one-letter code: Glycerol-3-phosphate dehydrogenase [NAD(P)+] (340 aa).

NADPH-binding residues include Ser13, Tyr14, and Lys108. 3 residues coordinate sn-glycerol 3-phosphate: Lys108, Gly137, and Thr139. Ala141 contributes to the NADPH binding site. Sn-glycerol 3-phosphate-binding residues include Lys193, Asp246, Ser256, Arg257, and Asn258. Lys193 functions as the Proton acceptor in the catalytic mechanism. Arg257 provides a ligand contact to NADPH. NADPH contacts are provided by Ile281 and Glu283.

The protein belongs to the NAD-dependent glycerol-3-phosphate dehydrogenase family.

Its subcellular location is the cytoplasm. It catalyses the reaction sn-glycerol 3-phosphate + NAD(+) = dihydroxyacetone phosphate + NADH + H(+). The enzyme catalyses sn-glycerol 3-phosphate + NADP(+) = dihydroxyacetone phosphate + NADPH + H(+). Its pathway is membrane lipid metabolism; glycerophospholipid metabolism. Its function is as follows. Catalyzes the reduction of the glycolytic intermediate dihydroxyacetone phosphate (DHAP) to sn-glycerol 3-phosphate (G3P), the key precursor for phospholipid synthesis. The polypeptide is Glycerol-3-phosphate dehydrogenase [NAD(P)+] (Bartonella quintana (strain Toulouse) (Rochalimaea quintana)).